Consider the following 209-residue polypeptide: Imidazole glycerol phosphate synthase subunit HisH (209 aa).

Residues Lys-3–Phe-209 enclose the Glutamine amidotransferase type-1 domain. Catalysis depends on Cys-81, which acts as the Nucleophile. Catalysis depends on residues His-185 and Glu-187.

In terms of assembly, heterodimer of HisH and HisF.

The protein resides in the cytoplasm. It catalyses the reaction 5-[(5-phospho-1-deoxy-D-ribulos-1-ylimino)methylamino]-1-(5-phospho-beta-D-ribosyl)imidazole-4-carboxamide + L-glutamine = D-erythro-1-(imidazol-4-yl)glycerol 3-phosphate + 5-amino-1-(5-phospho-beta-D-ribosyl)imidazole-4-carboxamide + L-glutamate + H(+). It carries out the reaction L-glutamine + H2O = L-glutamate + NH4(+). Its pathway is amino-acid biosynthesis; L-histidine biosynthesis; L-histidine from 5-phospho-alpha-D-ribose 1-diphosphate: step 5/9. Functionally, IGPS catalyzes the conversion of PRFAR and glutamine to IGP, AICAR and glutamate. The HisH subunit catalyzes the hydrolysis of glutamine to glutamate and ammonia as part of the synthesis of IGP and AICAR. The resulting ammonia molecule is channeled to the active site of HisF. The polypeptide is Imidazole glycerol phosphate synthase subunit HisH (Prochlorococcus marinus (strain NATL2A)).